Reading from the N-terminus, the 270-residue chain is Regulatory protein RecX (270 aa).

It belongs to the RecX family.

Its subcellular location is the cytoplasm. Functionally, modulates RecA activity. The protein is Regulatory protein RecX of Bacillus cereus (strain B4264).